A 441-amino-acid polypeptide reads, in one-letter code: Matrix extracellular phosphoglycoprotein (441 aa).

The first 24 residues, Met1–Ala24, serve as a signal peptide directing secretion. The N-linked (GlcNAc...) asparagine glycan is linked to Asn82. Residues Gln137–Asp441 form a disordered region. A compositionally biased stretch (basic residues) spans Lys142 to Thr156. The segment at Pro178–His200 is dentonin. Positions Arg183–Asp185 match the Cell attachment site motif. The O-linked (Xyl...) (chondroitin sulfate) serine glycan is linked to Ser192. The segment covering Pro211 to Ser223 has biased composition (polar residues). Residues Ser313–Gly325 are compositionally biased toward basic and acidic residues. Composition is skewed to polar residues over residues Gly349–Gln358 and Gly391–Arg405. Residues Arg424–Asp441 are ASARM motif; interaction with PHEX. Low complexity predominate over residues Glu428 to Asp441.

This sequence belongs to the PF07175/osteoregulin family. In terms of assembly, interacts (via ASARM motif) with PHEX; the interaction is zinc-dependent. In terms of processing, phosphorylated on serine residues in the ASARM motif; the phosphorylation is important for the inhibition of bone mineralization. Post-translationally, cleaved by CTSB/cathepsin B; the cleavage is blocked by metalloprotease PHEX. In terms of tissue distribution, expressed in osteocytes (at protein level). Expressed by chondrocytes, specifically in the hypertrophic zone of the bone growth plate (at protein level). Expressed in osteoblasts in bone (at protein level). Expressed by osteoblasts within the metaphysis (at protein level). Expressed at low levels in white fat, brown fat, testes, brain and aorta. Expressed in the craniofacial complex (at protein level). Expressed in odontoblasts, ameloblasts and in predentin during tooth development (at protein level). Expressed in the kidney (at protein level). Expressed in osteocytes in mandibular condylar cartilage and tibial cartilage (at protein level). Expressed in salivary glands.

It localises to the secreted. The protein resides in the extracellular space. Its subcellular location is the extracellular matrix. Functionally, regulates renal phosphate and uric acid excretion. Regulates bone mineralization by osteoblasts and cartilage mineralization by chondrocytes. Regulates the mineralization of the extracellular matrix of the craniofacial complex, such as teeth, bone and cartilage. Increases dental pulp stem cell proliferation. The polypeptide is Matrix extracellular phosphoglycoprotein (Mus musculus (Mouse)).